The sequence spans 357 residues: Protein MGF 360-8L (357 aa).

It belongs to the asfivirus MGF 360 family.

Its function is as follows. Plays a role in virus cell tropism, and may be required for efficient virus replication in macrophages. This African swine fever virus (isolate Tick/South Africa/Pretoriuskop Pr4/1996) (ASFV) protein is Protein MGF 360-8L.